The following is a 200-amino-acid chain: Probable nicotinate-nucleotide adenylyltransferase (200 aa).

This sequence belongs to the NadD family.

The enzyme catalyses nicotinate beta-D-ribonucleotide + ATP + H(+) = deamido-NAD(+) + diphosphate. It functions in the pathway cofactor biosynthesis; NAD(+) biosynthesis; deamido-NAD(+) from nicotinate D-ribonucleotide: step 1/1. Functionally, catalyzes the reversible adenylation of nicotinate mononucleotide (NaMN) to nicotinic acid adenine dinucleotide (NaAD). This is Probable nicotinate-nucleotide adenylyltransferase from Clostridium botulinum (strain Eklund 17B / Type B).